Consider the following 697-residue polypeptide: General transcription factor IIH subunit 1 (697 aa).

Over residues 115 to 136 (LPVSASNGSNTTSPTNGTSPIN) the composition is skewed to low complexity. Disordered stretches follow at residues 115 to 141 (LPVS…TSPT) and 228 to 250 (KNDS…ADVR). 2 BSD domains span residues 174 to 231 (LSKL…KNDS) and 255 to 307 (TPNA…YFYR). Residues 412–422 (KNLKKTKKDEN) are compositionally biased toward basic and acidic residues. Positions 412–462 (KNLKKTKKDENSTSTPTTTTTTTNTTNTTNTTTTTTTNNTTIKDPNLYNGD) are disordered. Positions 423–452 (STSTPTTTTTTTNTTNTTNTTTTTTTNNTT) are enriched in low complexity.

It belongs to the TFB1 family. As to quaternary structure, component of the 7-subunit TFIIH core complex composed of XPB/repB, XPD/repD, gtf2h1, gtf2h2, gtf2h3, gtf2h4 and gtf2h5, which is active in NER. The core complex associates with the 3-subunit CDK-activating kinase (CAK) module composed of cycH/cyclin H, cdk7 and mnat1 to form the 10-subunit holoenzyme (holo-TFIIH) active in transcription.

The protein localises to the nucleus. Functionally, component of the general transcription and DNA repair factor IIH (TFIIH) core complex, which is involved in general and transcription-coupled nucleotide excision repair (NER) of damaged DNA and, when complexed to CAK, in RNA transcription by RNA polymerase II. In NER, TFIIH acts by opening DNA around the lesion to allow the excision of the damaged oligonucleotide and its replacement by a new DNA fragment. In transcription, TFIIH has an essential role in transcription initiation. When the pre-initiation complex (PIC) has been established, TFIIH is required for promoter opening and promoter escape. Phosphorylation of the C-terminal tail (CTD) of the largest subunit of RNA polymerase II by the kinase module CAK controls the initiation of transcription. The polypeptide is General transcription factor IIH subunit 1 (gtf2h1) (Dictyostelium discoideum (Social amoeba)).